Here is a 229-residue protein sequence, read N- to C-terminus: Protein AF_2251 (229 aa).

Belongs to the CinA family.

The polypeptide is Protein AF_2251 (Archaeoglobus fulgidus (strain ATCC 49558 / DSM 4304 / JCM 9628 / NBRC 100126 / VC-16)).